We begin with the raw amino-acid sequence, 128 residues long: MIKVFLLIIGGAIGSALRFGVSTWMQRSMLYSFPFGILSVNVIGSFLIGFCWSIAEAYNFSINTRAFLFTGLFGGFTTFSSFALDTMVLMRTGEYKMALLNVLASNILGLIAVFLGIILGKNIITMIK.

Helical transmembrane passes span 4 to 24 (VFLLIIGGAIGSALRFGVSTW), 35 to 55 (FGILSVNVIGSFLIGFCWSIA), 67 to 87 (FLFTGLFGGFTTFSSFALDTM), and 99 to 119 (LLNVLASNILGLIAVFLGIIL). 2 residues coordinate Na(+): Gly-74 and Thr-77.

This sequence belongs to the fluoride channel Fluc/FEX (TC 1.A.43) family.

It localises to the cell inner membrane. The catalysed reaction is fluoride(in) = fluoride(out). Its activity is regulated as follows. Na(+) is not transported, but it plays an essential structural role and its presence is essential for fluoride channel function. Fluoride-specific ion channel. Important for reducing fluoride concentration in the cell, thus reducing its toxicity. The polypeptide is Fluoride-specific ion channel FluC (Parabacteroides distasonis (strain ATCC 8503 / DSM 20701 / CIP 104284 / JCM 5825 / NCTC 11152)).